The chain runs to 678 residues: Protein CASP (678 aa).

Residues 1-619 are Cytoplasmic-facing; sequence MAANVGSMFQ…LVLSNKMART (619 aa). Coiled-coil stretches lie at residues 67-450 and 502-556; these read LLKS…QDLS and LSII…FLQS. Phosphoserine is present on Ser586. Residues 620–640 traverse the membrane as a helical; Anchor for type IV membrane protein segment; that stretch reads IGFFYTLFLHCLVFLVLYKLA. Residues 641–678 lie on the Lumenal side of the membrane; that stretch reads WSESMERDCATFCAKKFADHLHKFHENDNGAAAGDLWQ.

The protein belongs to the CASP family. Homodimer; disulfide-linked. Interacts with GOLGA5.

The protein resides in the golgi apparatus membrane. Its function is as follows. May be involved in intra-Golgi retrograde transport. This chain is Protein CASP (CUX1), found in Homo sapiens (Human).